The sequence spans 368 residues: 3-isopropylmalate dehydrogenase (368 aa).

Gly-79–Glu-92 provides a ligand contact to NAD(+). Positions 99, 109, 138, and 228 each coordinate substrate. Asp-228, Asp-252, and Asp-256 together coordinate Mg(2+). Residue Gly-292–Asn-304 coordinates NAD(+).

Belongs to the isocitrate and isopropylmalate dehydrogenases family. LeuB type 1 subfamily. Homodimer. Mg(2+) is required as a cofactor. Mn(2+) serves as cofactor.

It localises to the cytoplasm. It catalyses the reaction (2R,3S)-3-isopropylmalate + NAD(+) = 4-methyl-2-oxopentanoate + CO2 + NADH. The protein operates within amino-acid biosynthesis; L-leucine biosynthesis; L-leucine from 3-methyl-2-oxobutanoate: step 3/4. In terms of biological role, catalyzes the oxidation of 3-carboxy-2-hydroxy-4-methylpentanoate (3-isopropylmalate) to 3-carboxy-4-methyl-2-oxopentanoate. The product decarboxylates to 4-methyl-2 oxopentanoate. This is 3-isopropylmalate dehydrogenase from Symbiobacterium thermophilum (strain DSM 24528 / JCM 14929 / IAM 14863 / T).